Consider the following 350-residue polypeptide: D-alanine--D-alanine ligase (350 aa).

Positions 133–334 (NDIFELNKIP…VSEVFDNLIG (202 aa)) constitute an ATP-grasp domain. 161 to 216 (FEKTSKAVYVKPCNAGSSVGVMRAETEEELEKAIQNAFQYDRRILVEEEIIGPELQ) is a binding site for ATP. The Mg(2+) site is built by Asp-288, Glu-300, and Asn-302.

This sequence belongs to the D-alanine--D-alanine ligase family. It depends on Mg(2+) as a cofactor. Requires Mn(2+) as cofactor.

The protein localises to the cytoplasm. The enzyme catalyses 2 D-alanine + ATP = D-alanyl-D-alanine + ADP + phosphate + H(+). Its pathway is cell wall biogenesis; peptidoglycan biosynthesis. Functionally, cell wall formation. The polypeptide is D-alanine--D-alanine ligase (Finegoldia magna (strain ATCC 29328 / DSM 20472 / WAL 2508) (Peptostreptococcus magnus)).